Here is a 1079-residue protein sequence, read N- to C-terminus: DNA ligase 4 (1079 aa).

The tract at residues 1–20 is disordered; it reads MAVHAPYNHAPPPTQEINGQ. Positions 295, 297, 298, 302, 357, 395, 460, 465, 482, and 484 each coordinate ATP. The N6-AMP-lysine intermediate role is filled by Lys-297. Glu-357 contacts Mg(2+). Residue Glu-460 participates in Mg(2+) binding. The BRCT 1 domain occupies 699 to 789; that stretch reads VETSIFSDMT…TALPFLKEFL (91 aa). Over residues 838–847 the composition is skewed to acidic residues; sequence DGEDKDEIDV. Positions 838–942 are disordered; sequence DGEDKDEIDV…SDVGVNGDDY (105 aa). Basic and acidic residues-rich tracts occupy residues 848 to 878 and 900 to 914; these read EESR…KKLQ and MSLK…ERSR. The region spanning 968–1078 is the BRCT 2 domain; sequence DEDRIFYHLA…TLLDEDLYKP (111 aa).

This sequence belongs to the ATP-dependent DNA ligase family. Mg(2+) serves as cofactor.

Its subcellular location is the nucleus. The catalysed reaction is ATP + (deoxyribonucleotide)n-3'-hydroxyl + 5'-phospho-(deoxyribonucleotide)m = (deoxyribonucleotide)n+m + AMP + diphosphate.. Its function is as follows. DNA ligase involved in DNA non-homologous end joining (NHEJ); required for double-strand break (DSB) repair. This chain is DNA ligase 4 (LIG4), found in Cryptococcus neoformans var. neoformans serotype D (strain JEC21 / ATCC MYA-565) (Filobasidiella neoformans).